The primary structure comprises 379 residues: Anhydro-N-acetylmuramic acid kinase (379 aa).

Residue G9–D16 coordinates ATP.

Belongs to the anhydro-N-acetylmuramic acid kinase family.

It carries out the reaction 1,6-anhydro-N-acetyl-beta-muramate + ATP + H2O = N-acetyl-D-muramate 6-phosphate + ADP + H(+). Its pathway is amino-sugar metabolism; 1,6-anhydro-N-acetylmuramate degradation. The protein operates within cell wall biogenesis; peptidoglycan recycling. Functionally, catalyzes the specific phosphorylation of 1,6-anhydro-N-acetylmuramic acid (anhMurNAc) with the simultaneous cleavage of the 1,6-anhydro ring, generating MurNAc-6-P. Is required for the utilization of anhMurNAc either imported from the medium or derived from its own cell wall murein, and thus plays a role in cell wall recycling. The protein is Anhydro-N-acetylmuramic acid kinase of Prochlorococcus marinus (strain MIT 9313).